The following is a 337-amino-acid chain: 1-aminocyclopropane-1-carboxylate deaminase (337 aa).

Lys-50 is subject to N6-(pyridoxal phosphate)lysine. The Nucleophile role is filled by Ser-77.

The protein belongs to the ACC deaminase/D-cysteine desulfhydrase family. In terms of assembly, homotrimer. Pyridoxal 5'-phosphate is required as a cofactor.

It catalyses the reaction 1-aminocyclopropane-1-carboxylate + H2O = 2-oxobutanoate + NH4(+). In terms of biological role, catalyzes a cyclopropane ring-opening reaction, the irreversible conversion of 1-aminocyclopropane-1-carboxylate (ACC) to ammonia and alpha-ketobutyrate. Allows growth on ACC as a nitrogen source. The chain is 1-aminocyclopropane-1-carboxylate deaminase from Allorhizobium ampelinum (strain ATCC BAA-846 / DSM 112012 / S4) (Agrobacterium vitis (strain S4)).